The following is a 159-amino-acid chain: MSITGQPHVYKKDTIIRLKPLSLNSNNRSYVFSSSKGNIQNIINHLNNLNEIVGRSLLGIWKINSYFGLSKDPSESKSKNPSVFNTAKNIFKSRGVDYSSQLKEVKSLLEAQNTRIKNLENAIQSLDNKIEPEPLTKEEVKELKESINSIKEGLKNIIG.

This sequence belongs to the caulimoviridae ORF II family.

Functionally, this protein is involved in virus transmission. The protein is Aphid transmission protein of Cauliflower mosaic virus (strain CM-1841) (CaMV).